The following is an 85-amino-acid chain: Large ribosomal subunit protein uL29 (85 aa).

The protein belongs to the universal ribosomal protein uL29 family.

The chain is Large ribosomal subunit protein uL29 from Thermobifida fusca (strain YX).